Here is a 345-residue protein sequence, read N- to C-terminus: MSVIVPIHGPAIAPAPAPERVGVLLVNLGTPDSCDTKGVRIYLREFLSDPRVIENQGLFWKLALNGIILNTRPARKAKDYQKIWNHEKNESPLKTITRAQAEKLSASLGDRGHLIVDWAMRYGNPSLRDRIEALVAKGCTRLLVVPLYPQYSAATSATVCDQAFRVLRELRAQPTLRVTPPYYRDSAYIDALATSIKSHLASLTFEPELIVASFHGMPQAYIDKGDPYQAQCVATVEALRERMGVADDKLLLTFQSRFGFDQWLQPYTDKTIEALARKGVRKLAVVMPGFSADCLETLEEIAQENAEIFMEHGGEEFTAIPCLNDSDAGVQVIRQLVLRELQGWL.

H215 and E296 together coordinate Fe cation.

It belongs to the ferrochelatase family.

The protein resides in the cytoplasm. The enzyme catalyses heme b + 2 H(+) = protoporphyrin IX + Fe(2+). It participates in porphyrin-containing compound metabolism; protoheme biosynthesis; protoheme from protoporphyrin-IX: step 1/1. In terms of biological role, catalyzes the ferrous insertion into protoporphyrin IX. The chain is Ferrochelatase from Rhodopseudomonas palustris (strain ATCC BAA-98 / CGA009).